A 732-amino-acid polypeptide reads, in one-letter code: Acylamino-acid-releasing enzyme (732 aa).

An N-acetylmethionine modification is found at methionine 1. Phosphoserine is present on residues serine 185 and serine 187. Residues serine 587, aspartate 675, and histidine 707 each act as charge relay system in the active site.

In terms of assembly, homotetramer. In terms of tissue distribution, expressed in erythrocytes (at protein level).

It localises to the cytoplasm. It catalyses the reaction Cleavage of an N-acetyl or N-formyl amino acid from the N-terminus of a polypeptide.. Homotetramerization is required for activity. Tetramerization results in the formation of a gated channel which is involved in substrate selection and substrate access to the catalytic sites. In terms of biological role, this enzyme catalyzes the hydrolysis of the N-terminal peptide bond of an N-acetylated peptide to generate an N-acetylated amino acid and a peptide with a free N-terminus. It preferentially cleaves off Ac-Ala, Ac-Met and Ac-Ser. Also, involved in the degradation of oxidized and glycated proteins. The chain is Acylamino-acid-releasing enzyme (APEH) from Homo sapiens (Human).